Consider the following 354-residue polypeptide: uncharacterized protein (354 aa).

It belongs to the asfivirus B354L family.

This is an uncharacterized protein from African swine fever virus (isolate Tick/South Africa/Pretoriuskop Pr4/1996) (ASFV).